Here is a 539-residue protein sequence, read N- to C-terminus: GMP synthase [glutamine-hydrolyzing] (539 aa).

One can recognise a Glutamine amidotransferase type-1 domain in the interval 4-202 (KILILDFGSQ…VLQIAGAKPD (199 aa)). Cysteine 81 (nucleophile) is an active-site residue. Residues histidine 176 and glutamate 178 contribute to the active site. The 193-residue stretch at 203–395 (WIMSNHIEEA…LGLPPEMVYR (193 aa)) folds into the GMPS ATP-PPase domain. 230-236 (SGGVDSS) serves as a coordination point for ATP.

As to quaternary structure, homodimer.

It catalyses the reaction XMP + L-glutamine + ATP + H2O = GMP + L-glutamate + AMP + diphosphate + 2 H(+). The protein operates within purine metabolism; GMP biosynthesis; GMP from XMP (L-Gln route): step 1/1. Functionally, catalyzes the synthesis of GMP from XMP. This is GMP synthase [glutamine-hydrolyzing] from Burkholderia ambifaria (strain MC40-6).